The sequence spans 308 residues: Uricase-2 isozyme 1 (308 aa).

Active-site charge relay system residues include Lys-17 and Thr-63. Thr-63, Asp-64, Phe-165, Arg-182, Val-237, Gln-238, and Asn-264 together coordinate urate. His-266 serves as the catalytic Charge relay system. Residues 306-308 carry the Microbody targeting signal motif; the sequence is SKL.

Belongs to the uricase family.

It is found in the peroxisome. The catalysed reaction is urate + O2 + H2O = 5-hydroxyisourate + H2O2. The protein operates within purine metabolism; urate degradation; (S)-allantoin from urate: step 1/3. Catalyzes the oxidation of uric acid to 5-hydroxyisourate, which is further processed to form (S)-allantoin. The protein is Uricase-2 isozyme 1 of Canavalia lineata (Beach bean).